Reading from the N-terminus, the 147-residue chain is UPF0735 ACT domain-containing protein ABC1543 (147 aa).

The region spanning 70–145 (TFSINLADRS…SVERVELVGS (76 aa)) is the ACT domain.

The protein belongs to the UPF0735 family.

This chain is UPF0735 ACT domain-containing protein ABC1543, found in Shouchella clausii (strain KSM-K16) (Alkalihalobacillus clausii).